Here is a 257-residue protein sequence, read N- to C-terminus: 3-methyl-2-oxobutanoate hydroxymethyltransferase (257 aa).

The Mg(2+) site is built by Asp-42 and Asp-86. Residues 42 to 43 (DS), Asp-86, and Lys-116 each bind 3-methyl-2-oxobutanoate. A Mg(2+)-binding site is contributed by Glu-118. The active-site Proton acceptor is the Glu-185.

The protein belongs to the PanB family. Homodecamer; pentamer of dimers. Requires Mg(2+) as cofactor.

It is found in the cytoplasm. The enzyme catalyses 3-methyl-2-oxobutanoate + (6R)-5,10-methylene-5,6,7,8-tetrahydrofolate + H2O = 2-dehydropantoate + (6S)-5,6,7,8-tetrahydrofolate. It participates in cofactor biosynthesis; (R)-pantothenate biosynthesis; (R)-pantoate from 3-methyl-2-oxobutanoate: step 1/2. In terms of biological role, catalyzes the reversible reaction in which hydroxymethyl group from 5,10-methylenetetrahydrofolate is transferred onto alpha-ketoisovalerate to form ketopantoate. In Prochlorococcus marinus (strain AS9601), this protein is 3-methyl-2-oxobutanoate hydroxymethyltransferase.